Here is a 193-residue protein sequence, read N- to C-terminus: MAVMIKKSDFLGIPSEEYRGILSLRYQVFKRRLEWDLVSEDNLESDEYDNSNAEYIYACDDAEEVNGCWRLLPTTGDYMLKTVFPELLGDQVAPRDPNIVELSRFAVGKNSSKINNSASEITMKLFQAIYKHAVSQGITEYVTVTSIAIERFLKRIKVPCHRIGDKEIHLLGNTRSVVLSMPINDQFRKAVSN.

It belongs to the autoinducer synthase family.

The enzyme catalyses a fatty acyl-[ACP] + S-adenosyl-L-methionine = an N-acyl-L-homoserine lactone + S-methyl-5'-thioadenosine + holo-[ACP] + H(+). Required for the synthesis of OHHL (N-(3-oxohexanoyl)-L-homoserine lactone) also known as VAI or N-(beta-ketocaproyl)homoserine lactone or 3-oxo-N-(tetrahydro-2-oxo-3-furanyl)-hexanamide, an autoinducer molecule which binds to LuxR and thus acts in bioluminescence regulation. The sequence is that of Acyl-homoserine-lactone synthase (luxI) from Aliivibrio fischeri (strain ATCC 700601 / ES114) (Vibrio fischeri).